The following is a 209-amino-acid chain: Pyridoxal 5'-phosphate synthase subunit PdxT (209 aa).

58 to 60 provides a ligand contact to L-glutamine; the sequence is GES. Cys90 serves as the catalytic Nucleophile. Residues Arg119 and 148 to 149 each bind L-glutamine; that span reads IR. Active-site charge relay system residues include His185 and Glu187.

Belongs to the glutaminase PdxT/SNO family. In terms of assembly, in the presence of PdxS, forms a dodecamer of heterodimers. Only shows activity in the heterodimer.

The enzyme catalyses aldehydo-D-ribose 5-phosphate + D-glyceraldehyde 3-phosphate + L-glutamine = pyridoxal 5'-phosphate + L-glutamate + phosphate + 3 H2O + H(+). It carries out the reaction L-glutamine + H2O = L-glutamate + NH4(+). It functions in the pathway cofactor biosynthesis; pyridoxal 5'-phosphate biosynthesis. Catalyzes the hydrolysis of glutamine to glutamate and ammonia as part of the biosynthesis of pyridoxal 5'-phosphate. The resulting ammonia molecule is channeled to the active site of PdxS. The sequence is that of Pyridoxal 5'-phosphate synthase subunit PdxT from Clavibacter sepedonicus (Clavibacter michiganensis subsp. sepedonicus).